Consider the following 188-residue polypeptide: 3-hydroxyanthranilate 3,4-dioxygenase 2 (188 aa).

Residue R46 coordinates O2. Residues H50, E70, and H108 each coordinate Fe cation. Substrate is bound at residue E70. R112 and E122 together coordinate substrate.

This sequence belongs to the 3-HAO family. Fe(2+) is required as a cofactor.

It localises to the cytoplasm. The enzyme catalyses 3-hydroxyanthranilate + O2 = (2Z,4Z)-2-amino-3-carboxymuconate 6-semialdehyde. It participates in cofactor biosynthesis; NAD(+) biosynthesis; quinolinate from L-kynurenine: step 3/3. Its function is as follows. Catalyzes the oxidative ring opening of 3-hydroxyanthranilate to 2-amino-3-carboxymuconate semialdehyde, which spontaneously cyclizes to quinolinate. This is 3-hydroxyanthranilate 3,4-dioxygenase 2 (bna1-2) from Aspergillus fumigatus (strain CBS 144.89 / FGSC A1163 / CEA10) (Neosartorya fumigata).